Here is a 505-residue protein sequence, read N- to C-terminus: Maturase K (505 aa).

The protein belongs to the intron maturase 2 family. MatK subfamily.

Its subcellular location is the plastid. It localises to the chloroplast. In terms of biological role, usually encoded in the trnK tRNA gene intron. Probably assists in splicing its own and other chloroplast group II introns. This Amaranthus greggii (Gregg's amaranth) protein is Maturase K.